We begin with the raw amino-acid sequence, 207 residues long: uncharacterized protein (207 aa).

A YrdC-like domain is found at 14 to 201; it reads ARLINQAVEI…SPVILREGSG (188 aa).

Belongs to the SUA5 family.

This is an uncharacterized protein from Haemophilus influenzae (strain ATCC 51907 / DSM 11121 / KW20 / Rd).